Reading from the N-terminus, the 505-residue chain is Glucan endo-1,3-beta-glucosidase 4 (505 aa).

Positions 1–23 (MLLPRWFAEALLLLLSILACSNA) are cleaved as a signal peptide. N-linked (GlcNAc...) asparagine glycosylation is found at Asn70 and Asn110. The active-site Proton donor is Glu119. N-linked (GlcNAc...) asparagine glycans are attached at residues Asn178 and Asn256. Residue Glu266 is the Nucleophile of the active site. N-linked (GlcNAc...) asparagine glycans are attached at residues Asn298, Asn338, and Asn357. The cysteines at positions 363 and 426 are disulfide-linked. Asn453 carries N-linked (GlcNAc...) asparagine glycosylation. A lipid anchor (GPI-anchor amidated alanine) is attached at Ala474. Positions 475 to 505 (NARIIFSYHLPILAPLALTLLQLLLQHDRLL) are cleaved as a propeptide — removed in mature form.

It belongs to the glycosyl hydrolase 17 family. Contains two additional disulfide bonds.

The protein localises to the cell membrane. It carries out the reaction Hydrolysis of (1-&gt;3)-beta-D-glucosidic linkages in (1-&gt;3)-beta-D-glucans.. The sequence is that of Glucan endo-1,3-beta-glucosidase 4 from Arabidopsis thaliana (Mouse-ear cress).